The sequence spans 793 residues: Short transient receptor potential channel 1 (793 aa).

Residues 1-30 form a disordered region; it reads MMAALYPSTDLSGASSSSLPSSPSSSSPNE. The Cytoplasmic portion of the chain corresponds to 1-345; it reads MMAALYPSTD…FGQMSGYRRK (345 aa). A compositionally biased stretch (low complexity) spans 15-28; sequence SSSSLPSSPSSSSP. ANK repeat units follow at residues 46–75, 83–109, 111–156, and 158–180; these read LNEK…SGDL, LGRN…YGCQ, ADAL…EYST, and MDVA…MLLK. The Zn(2+) site is built by histidine 189, cysteine 193, cysteine 195, and cysteine 198. The discontinuously helical intramembrane region spans 346–379; the sequence is PTCKKIMTVLTVGIFWPVLSLCYLIAPKSQFGRI. The Cytoplasmic portion of the chain corresponds to 380-386; sequence IHTPFMK. Residues 387-404 form a helical membrane-spanning segment; sequence FIIHGASYFTFLLLLNLY. The Extracellular segment spans residues 405–422; the sequence is SLVYNEDKKNTMGPALER. A helical transmembrane segment spans residues 423 to 439; sequence IDYLLILWIIGMIWSDI. Residues 440-455 lie on the Cytoplasmic side of the membrane; it reads KRLWYEGLEDFLEESR. A helical transmembrane segment spans residues 456–475; sequence NQLSFVMNSLYLATFALKVV. At 476–496 the chain is on the extracellular side; the sequence is AHNKFHDFADRKDWDAFHPTL. A helical membrane pass occupies residues 497 to 517; it reads VAEGLFAFANVLSYLRLFFMY. Residues 518–536 lie on the Cytoplasmic side of the membrane; the sequence is TTSSILGPLQISMGQMLQD. Residues 537 to 558 form a helical membrane-spanning segment; it reads FGKFLGMFLLVLFSFTIGLTQL. The Extracellular segment spans residues 559-623; the sequence is YDKGYTSKEQ…GEELQSFVGA (65 aa). The cysteines at positions 571 and 576 are disulfide-linked. Residues 624-644 form a helical membrane-spanning segment; sequence VIVGTYNVVVVIVLTKLLVAM. At 645–793 the chain is on the cytoplasmic side; that stretch reads LHKSFQLIAN…SKYAMFYPRN (149 aa).

It belongs to the transient receptor (TC 1.A.4) family. STrpC subfamily. TRPC1 sub-subfamily. In terms of assembly, heterotetramer with TRPC4 and/or TRPC5. Forms a heteromeric ion channel with TRPC4, with a 1:3 TRPC1:TRPC4 stoichiometry. Unlike other TRP channel proteins, does not form a homomeric channel. Interacts with TRPC4AP. Interacts with ITPR3. Interacts with MX1 and RNF24. Interacts with FKBP4. Interacts with PLSCR1. Interacts with PKD2L2. Forms a heterotetramer with PKD2 with a 2:2 stoichiometry; has distinct channel properties separate from PKD2 or TRPC1 homomers alone. Interacts with isoform 2 of TRPC3. In terms of processing, activation of PRKCA induces phosphorylation of TRPC1 and subsequent Ca2+ entry into cells. In terms of tissue distribution, seems to be ubiquitous.

It localises to the cell membrane. It carries out the reaction Ca(2+)(in) = Ca(2+)(out). The enzyme catalyses Na(+)(in) = Na(+)(out). It catalyses the reaction Li(+)(in) = Li(+)(out). The catalysed reaction is Cs(+)(in) = Cs(+)(out). May be operated by a phosphatidylinositol second messenger system activated by receptor tyrosine kinases or G-protein coupled receptors. Also activated by intracellular calcium store depletion. Inhibited by xanthine-based inhibitor Pico145. In terms of biological role, forms a receptor-activated non-selective calcium permeant cation channel. Forms a heteromeric ion channel with TRPC4 or TRPC5 that has reduced calcium permeability compared to the homomeric TRPC4 or TRPC5 channel. Also permeable to monovalent ions including sodium, lithium and cesium ions. Its function is as follows. Forms a receptor-activated non-selective calcium permeant cation channel. Also activated by intracellular calcium store depletion. The polypeptide is Short transient receptor potential channel 1 (TRPC1) (Homo sapiens (Human)).